Consider the following 93-residue polypeptide: Acylphosphatase (93 aa).

The 89-residue stretch at 5-93 (AKQIVVRGRV…PNFRGFQVTG (89 aa)) folds into the Acylphosphatase-like domain. Residues Arg20 and Asn38 contribute to the active site.

The protein belongs to the acylphosphatase family.

The enzyme catalyses an acyl phosphate + H2O = a carboxylate + phosphate + H(+). The protein is Acylphosphatase (acyP) of Lacticaseibacillus paracasei (strain ATCC 334 / BCRC 17002 / CCUG 31169 / CIP 107868 / KCTC 3260 / NRRL B-441) (Lactobacillus paracasei).